The following is a 354-amino-acid chain: Probable L-ascorbate-6-phosphate lactonase UlaG (354 aa).

The protein belongs to the UlaG family. A divalent metal cation serves as cofactor.

The protein resides in the cytoplasm. It carries out the reaction L-ascorbate 6-phosphate + H2O = 3-dehydro-L-gulonate 6-phosphate. The protein operates within cofactor degradation; L-ascorbate degradation; D-xylulose 5-phosphate from L-ascorbate: step 1/4. In terms of biological role, probably catalyzes the hydrolysis of L-ascorbate-6-P into 3-keto-L-gulonate-6-P. Is essential for L-ascorbate utilization under anaerobic conditions. The polypeptide is Probable L-ascorbate-6-phosphate lactonase UlaG (Shigella boydii serotype 4 (strain Sb227)).